We begin with the raw amino-acid sequence, 947 residues long: Bromodomain testis-specific protein (947 aa).

A Bromo 1 domain is found at 27–133 (RLTNQLQYLQ…KLFMQKLSQM (107 aa)). Asparagine 109 serves as a coordination point for JQ1. Serine 187 carries the phosphoserine modification. The interval 202–228 (QTAAQVTKGVKRKADTTTPATSAVKAS) is disordered. A Nuclear localization signal motif is present at residues 209 to 220 (KGVKRKADTTTP). The span at 217-228 (TTTPATSAVKAS) shows a compositional bias: polar residues. The region spanning 267–376 (VKVTEQLRHC…DVFETHFSKI (110 aa)) is the Bromo 2 domain. Disordered regions lie at residues 395–420 (ETTGRENTNEASSEGNSSDDSEDERV), 444–511 (PFRK…KPMN), 610–698 (NNQL…IPPE), and 882–924 (NKCS…RRRE). Positions 417–470 (DERVKRLAKLQEQLKAVHQQLQVLSQVPFRKLNKKKEKSKKEKKKEKVNNSNEN) form a coiled coil. The span at 447–462 (KLNKKKEKSKKEKKKE) shows a compositional bias: basic residues. Residues 470–481 (NPRKMCEQMRLK) are compositionally biased toward basic and acidic residues. A compositionally biased stretch (basic residues) spans 482-494 (EKSKRNQPKKRKQ). Residues 500 to 582 (KSEDEDNAKP…ACLRKRPLKP (83 aa)) enclose the NET domain. A coiled-coil region spans residues 591-621 (KEELHSQKKQELEKRLLDVNNQLNSRKRQTK). The segment covering 637–662 (LSESSSSSSSSSESESSSSDLSSSDS) has biased composition (low complexity). 2 stretches are compositionally biased toward basic and acidic residues: residues 674 to 692 (TEVKPNDSPSKENVKKMKN) and 885 to 924 (SGEEQKEHQQSSEAQDKSKLWLLKDRDLARQKEQERRRRE).

This sequence belongs to the BET family. As to quaternary structure, interacts with mRNA splicing machinery proteins SRSF2, DDX5, HNRNPK and TARDBP. Interacts with the acetylated N-terminus of histone H1, H2, H3 and H4. Interacts with P-TEFb components CDK9 and CCNT1/cyclin-T1. Interacts with SMARCE1. Interacts with the acetylated N-terminus of histone H1.4, H2A, H2B, H3 and H4. Ubiquitinated in a SPOP-dependent manner, leading to proteasomal degradation. In terms of tissue distribution, testis-specific. A 3-fold higher expression is seen in adult testis than in embryo testis. Expression seems to be correlated with histone H4 hyperacetylation during the haploid phase of spermatogenesis (spermiogenesis). No expression, or very low expression is seen in patients' testes with abnormal spermatogenesis. Expressed in cancers such as non-small cell lung cancer and squamous cell carcinomas of the head and neck as well as of esophagus, but not in melanoma or in cancers of the colon, breast, kidney and bladder.

The protein localises to the nucleus. Testis-specific chromatin protein that specifically binds histone H4 acetylated at 'Lys-5' and 'Lys-8' (H4K5ac and H4K8ac, respectively) and plays a key role in spermatogenesis. Required in late pachytene spermatocytes: plays a role in meiotic and post-meiotic cells by binding to acetylated histones at the promoter of specific meiotic and post-meiotic genes, facilitating their activation at the appropriate time. In the post-meiotic phase of spermatogenesis, binds to hyperacetylated histones and participates in their general removal from DNA. Also recognizes and binds a subset of butyrylated histones: able to bind histone H4 butyrylated at 'Lys-8' (H4K8ac), while it is not able to bind H4 butyrylated at 'Lys-5' (H4K5ac). Also acts as a component of the splicing machinery in pachytene spermatocytes and round spermatids and participates in 3'-UTR truncation of specific mRNAs in post-meiotic spermatids. Required for chromocenter organization, a structure comprised of peri-centromeric heterochromatin. The chain is Bromodomain testis-specific protein (BRDT) from Homo sapiens (Human).